The following is a 471-amino-acid chain: Glutamate--tRNA ligase (471 aa).

Positions 9–19 (PSPTGYLHVGG) match the 'HIGH' region motif. Residues Cys98, Cys100, Cys125, and Asp127 each coordinate Zn(2+). The 'KMSKS' region motif lies at 237-241 (KLSKR). Lys240 serves as a coordination point for ATP.

Belongs to the class-I aminoacyl-tRNA synthetase family. Glutamate--tRNA ligase type 1 subfamily. In terms of assembly, monomer. Zn(2+) is required as a cofactor.

The protein localises to the cytoplasm. The catalysed reaction is tRNA(Glu) + L-glutamate + ATP = L-glutamyl-tRNA(Glu) + AMP + diphosphate. Functionally, catalyzes the attachment of glutamate to tRNA(Glu) in a two-step reaction: glutamate is first activated by ATP to form Glu-AMP and then transferred to the acceptor end of tRNA(Glu). In Yersinia pestis, this protein is Glutamate--tRNA ligase.